The sequence spans 341 residues: UDP-glucose 4-epimerase (341 aa).

This sequence belongs to the polysaccharide synthase family.

It carries out the reaction UDP-alpha-D-glucose = UDP-alpha-D-galactose. Functionally, epimerizes UDP-galactose to UDP-glucose. May contribute to formation of LPS or the exopolysaccharide slime layer by providing UDP-galactose as a substrate for either molecule. This chain is UDP-glucose 4-epimerase (capD), found in Rickettsia prowazekii (strain Madrid E).